The primary structure comprises 209 residues: Xanthine phosphoribosyltransferase 1 (209 aa).

Serine 79 carries the post-translational modification Phosphoserine.

It is found in the cytoplasm. Functionally, may act as a xanthine phosphoribosyltransferase involved in the synthesis of purine nucleotides. Such activity is however unclear in vivo. This Saccharomyces cerevisiae (strain ATCC 204508 / S288c) (Baker's yeast) protein is Xanthine phosphoribosyltransferase 1 (XPT1).